Here is a 783-residue protein sequence, read N- to C-terminus: Lon protease (783 aa).

Residues I11–I203 form the Lon N-terminal domain. G355–T362 serves as a coordination point for ATP. Residues S591–R772 enclose the Lon proteolytic domain. Active-site residues include S678 and K721.

Belongs to the peptidase S16 family. Homohexamer. Organized in a ring with a central cavity.

Its subcellular location is the cytoplasm. The catalysed reaction is Hydrolysis of proteins in presence of ATP.. Functionally, ATP-dependent serine protease that mediates the selective degradation of mutant and abnormal proteins as well as certain short-lived regulatory proteins. Required for cellular homeostasis and for survival from DNA damage and developmental changes induced by stress. Degrades polypeptides processively to yield small peptide fragments that are 5 to 10 amino acids long. Binds to DNA in a double-stranded, site-specific manner. Regulates swarmer cell differentiation of V.parahaemolyticus. This chain is Lon protease, found in Vibrio parahaemolyticus serotype O3:K6 (strain RIMD 2210633).